Here is a 991-residue protein sequence, read N- to C-terminus: Integrator complex subunit 10-like protein (991 aa).

5 disordered regions span residues asparagine 180–asparagine 217, tyrosine 310–lysine 345, asparagine 462–serine 484, asparagine 549–proline 614, and glutamate 961–glutamate 991. A compositionally biased stretch (low complexity) spans lysine 319–glutamine 333. Over residues glycine 473–serine 484 the composition is skewed to acidic residues. Over residues asparagine 549–asparagine 609 the composition is skewed to low complexity. Residues tyrosine 964–glutamate 991 show a composition bias toward polar residues.

Its subcellular location is the nucleus. May be a component of the Integrator complex, a complex involved in the small nuclear RNAs (snRNA) U1 and U2 transcription and in their 3'-box-dependent processing. This is Integrator complex subunit 10-like protein from Dictyostelium discoideum (Social amoeba).